The chain runs to 474 residues: MSQPKRYEAGVKEYRETYWEPTYVPKDSDFLAVFKIVPQPGVPREESAAAVAAESSTATWTTVWTDLLTDLYYYKGRAYAIEDVPGDDEAFYAFIAYPMGLFEEGSVVNVFTSLVGNVFGFKAVRSLRLEDVRIPLWFVTTCPGPPHGIYVERDKLNKYGRPLLGCTIKPKLGLSAKNYGRAVYECLRGGLDFTKDDENVNSQPFMRWRDRFLFCQEAIEKAQAETGERKGHYMNVTGPTMEEIYKRAEFAKEIGTPIIMIDYLTVGWAATQSLSKWCRDNGMLLHVHRAMHAVIDRNPKHGINFRVLAKIMRLIGGDHLHSGTVVGKLEGDRAATLGWIDLMRDRYVKADRSRGIFFDQDWGQMPGMFPVASGGIHVWHMPALVSIFGDDSVLQFGGGTIGHPWGNAAGACANRVALEACVKARNEGLPIEKMGREILTEAAKSCPELKVAMETWKEVKFDFDTVDKLDVQHR.

The substrate site is built by Asn117 and Thr167. The active-site Proton acceptor is the Lys169. Lys171 contributes to the substrate binding site. Mg(2+)-binding residues include Lys195, Asp197, and Glu198. Lys195 is modified (N6-carboxylysine). The active-site Proton acceptor is His288. Substrate-binding residues include Arg289, His321, and Ser373.

The protein belongs to the RuBisCO large chain family. Type I subfamily. As to quaternary structure, heterohexadecamer of 8 large chains and 8 small chains. Mg(2+) is required as a cofactor.

The enzyme catalyses 2 (2R)-3-phosphoglycerate + 2 H(+) = D-ribulose 1,5-bisphosphate + CO2 + H2O. The catalysed reaction is D-ribulose 1,5-bisphosphate + O2 = 2-phosphoglycolate + (2R)-3-phosphoglycerate + 2 H(+). RuBisCO catalyzes two reactions: the carboxylation of D-ribulose 1,5-bisphosphate, the primary event in carbon dioxide fixation, as well as the oxidative fragmentation of the pentose substrate. Both reactions occur simultaneously and in competition at the same active site. This is Ribulose bisphosphate carboxylase large chain from Hydrogenophilus thermoluteolus (Pseudomonas hydrogenothermophila).